The primary structure comprises 120 residues: Cytochrome c2 iso-1 (120 aa).

Glutamine 1 is modified (pyrrolidone carboxylic acid). Heme c is bound by residues cysteine 15, cysteine 18, histidine 19, and methionine 98.

This sequence belongs to the cytochrome c family. Post-translationally, binds 1 heme c group covalently per subunit.

Its function is as follows. Cytochrome c2 is found mainly in purple, non-sulfur, photosynthetic bacteria where it functions as the electron donor to the oxidized bacteriochlorophyll in the photophosphorylation pathway. However, it may also have a role in the respiratory chain and is found in some non-photosynthetic bacteria. The chain is Cytochrome c2 iso-1 from Rhodospirillum centenum (Rhodocista centenaria).